Consider the following 907-residue polypeptide: Putative pentatricopeptide repeat-containing protein At5g59900 (907 aa).

22 PPR repeats span residues 103–137 (STAS…ALKP), 155–185 (SSSS…MITK), 191–225 (EVRT…GIRP), 226–260 (DVYI…GCDV), 261–295 (NIVP…DLKP), 296–330 (DVVT…RFSP), 331–365 (SEAA…GVSP), 366–400 (NLFV…GLRP), 401–435 (NDVT…GLKL), 436–470 (SVYP…KLEP), 471–505 (TVVT…GIAP), 506–540 (SIYT…NVKP), 541–575 (NRVT…GIVP), 576–610 (DTYS…NCEL), 611–645 (NEIC…GVDL), 646–680 (DLVC…GLKP), 681–715 (DDVI…GCVP), 716–750 (NEVT…SSVP), 751–782 (NQVT…ILKG), 786–820 (NTAT…GVSP), 821–855 (DCIT…GIRP), and 856–890 (DRVA…GLIP). Residues 887–907 (GLIPNNKTSRTTTSNDTSSKS) are disordered. Low complexity predominate over residues 891 to 907 (NNKTSRTTTSNDTSSKS).

The protein belongs to the PPR family. P subfamily.

This Arabidopsis thaliana (Mouse-ear cress) protein is Putative pentatricopeptide repeat-containing protein At5g59900.